We begin with the raw amino-acid sequence, 842 residues long: Probable cleavage and polyadenylation specificity factor subunit 2 (842 aa).

Basic and acidic residues predominate over residues 414-425 (AEETRIRMERAR). Disordered stretches follow at residues 414 to 442 (AEET…DDIA) and 708 to 747 (METF…SIPI). A compositionally biased stretch (acidic residues) spans 432-441 (ESDDSDDDDI). Positions 731–747 (SNGQSKENDENASSIPI) are enriched in polar residues.

This sequence belongs to the metallo-beta-lactamase superfamily. RNA-metabolizing metallo-beta-lactamase-like family. CPSF2/YSH1 subfamily. As to quaternary structure, CPSF is a heterotetramer composed of four distinct subunits 160, 100, 70 and 30 kDa.

Its subcellular location is the nucleus. In terms of biological role, CPSF plays a key role in pre-mRNA 3'-end formation, recognizing the AAUAAA signal sequence and interacting with poly(A)polymerase and other factors to bring about cleavage and poly(A) addition. The chain is Probable cleavage and polyadenylation specificity factor subunit 2 from Caenorhabditis briggsae.